The following is a 720-amino-acid chain: Phosphoribosylformylglycinamidine synthase subunit PurL (720 aa).

His47 is an active-site residue. Residues Tyr50 and Lys89 each coordinate ATP. Mg(2+) is bound at residue Glu91. Substrate-binding positions include 92–95 and Arg114; that span reads SHNH. Residue His93 is the Proton acceptor of the active site. A Mg(2+)-binding site is contributed by Asp115. Residue Gln238 coordinates substrate. Asp266 contacts Mg(2+). Residue 310–312 coordinates substrate; it reads ESQ. Residues Asp488 and Gly525 each contribute to the ATP site. Asn526 contacts Mg(2+). Ser528 serves as a coordination point for substrate.

Belongs to the FGAMS family. Monomer. Part of the FGAM synthase complex composed of 1 PurL, 1 PurQ and 2 PurS subunits.

The protein localises to the cytoplasm. The catalysed reaction is N(2)-formyl-N(1)-(5-phospho-beta-D-ribosyl)glycinamide + L-glutamine + ATP + H2O = 2-formamido-N(1)-(5-O-phospho-beta-D-ribosyl)acetamidine + L-glutamate + ADP + phosphate + H(+). Its pathway is purine metabolism; IMP biosynthesis via de novo pathway; 5-amino-1-(5-phospho-D-ribosyl)imidazole from N(2)-formyl-N(1)-(5-phospho-D-ribosyl)glycinamide: step 1/2. In terms of biological role, part of the phosphoribosylformylglycinamidine synthase complex involved in the purines biosynthetic pathway. Catalyzes the ATP-dependent conversion of formylglycinamide ribonucleotide (FGAR) and glutamine to yield formylglycinamidine ribonucleotide (FGAM) and glutamate. The FGAM synthase complex is composed of three subunits. PurQ produces an ammonia molecule by converting glutamine to glutamate. PurL transfers the ammonia molecule to FGAR to form FGAM in an ATP-dependent manner. PurS interacts with PurQ and PurL and is thought to assist in the transfer of the ammonia molecule from PurQ to PurL. This is Phosphoribosylformylglycinamidine synthase subunit PurL from Cereibacter sphaeroides (strain KD131 / KCTC 12085) (Rhodobacter sphaeroides).